Here is a 333-residue protein sequence, read N- to C-terminus: Eukaryotic translation initiation factor 3 subunit I (333 aa).

WD repeat units lie at residues 8-47, 50-91, 144-183, and 186-225; these read GHER…RLGT, GHTG…ALLK, CNDS…VLVN, and EHSR…HQKT. A Phosphothreonine modification is found at Thr219. N6-acetyllysine is present on Lys264. Residue Lys282 forms a Glycyl lysine isopeptide (Lys-Gly) (interchain with G-Cter in ubiquitin) linkage. Residues 283-324 form a WD 5 repeat; that stretch reads GHFGPINSVAFHPDGKSYSSGGEDGYVRIHYFDPQYFEFEFE. Tyr308 carries the post-translational modification Phosphotyrosine.

The protein belongs to the eIF-3 subunit I family. As to quaternary structure, component of the eukaryotic translation initiation factor 3 (eIF-3) complex, which is composed of 13 subunits: EIF3A, EIF3B, EIF3C, EIF3D, EIF3E, EIF3F, EIF3G, EIF3H, EIF3I, EIF3J, EIF3K, EIF3L and EIF3M. The eIF-3 complex appears to include 3 stable modules: module A is composed of EIF3A, EIF3B, EIF3G and EIF3I; module B is composed of EIF3F, EIF3H, and EIF3M; and module C is composed of EIF3C, EIF3D, EIF3E, EIF3K and EIF3L. EIF3C of module C binds EIF3B of module A and EIF3H of module B, thereby linking the three modules. EIF3J is a labile subunit that binds to the eIF-3 complex via EIF3B. The eIF-3 complex interacts with RPS6KB1 under conditions of nutrient depletion. Mitogenic stimulation leads to binding and activation of a complex composed of MTOR and RPTOR, leading to phosphorylation and release of RPS6KB1 and binding of EIF4B to eIF-3. Post-translationally, phosphorylated by TGF-beta type II receptor.

Its subcellular location is the cytoplasm. In terms of biological role, component of the eukaryotic translation initiation factor 3 (eIF-3) complex, which is required for several steps in the initiation of protein synthesis. The eIF-3 complex associates with the 40S ribosome and facilitates the recruitment of eIF-1, eIF-1A, eIF-2:GTP:methionyl-tRNAi and eIF-5 to form the 43S pre-initiation complex (43S PIC). The eIF-3 complex stimulates mRNA recruitment to the 43S PIC and scanning of the mRNA for AUG recognition. The eIF-3 complex is also required for disassembly and recycling of post-termination ribosomal complexes and subsequently prevents premature joining of the 40S and 60S ribosomal subunits prior to initiation. The eIF-3 complex specifically targets and initiates translation of a subset of mRNAs involved in cell proliferation, including cell cycling, differentiation and apoptosis, and uses different modes of RNA stem-loop binding to exert either translational activation or repression. In Oryctolagus cuniculus (Rabbit), this protein is Eukaryotic translation initiation factor 3 subunit I.